The chain runs to 100 residues: uncharacterized protein (100 aa).

Residues 1–17 (MIMKYFCTVMIAIALVG) form the signal peptide. Cys-18 carries the N-palmitoyl cysteine lipid modification. A lipid anchor (S-diacylglycerol cysteine) is attached at Cys-18.

It localises to the cell membrane. This is an uncharacterized protein from Salmonella typhi.